A 138-amino-acid polypeptide reads, in one-letter code: Probable DNA-directed RNA polymerases I, II, and III subunit RPABC2 (138 aa).

Composition is skewed to acidic residues over residues 1-27 and 35-46; these read MADD…VIEE and EEEDDDNNVDEN. Residues 1-46 form a disordered region; the sequence is MADDDDYQDMDNDDFVDDNEMEDVIEEEQQRPDHEEEDDDNNVDEN.

The protein belongs to the archaeal Rpo6/eukaryotic RPB6 RNA polymerase subunit family. Component of the RNA polymerase I (Pol I), RNA polymerase II (Pol II) and RNA polymerase III (Pol III) complexes consisting of at least 13, 12 and 17 subunits, respectively.

It localises to the nucleus. In terms of biological role, DNA-dependent RNA polymerases catalyze the transcription of DNA into RNA using the four ribonucleoside triphosphates as substrates. Common component of RNA polymerases I, II and III which synthesize ribosomal RNA precursors, mRNA precursors and many functional non-coding RNAs, and small RNAs, such as 5S rRNA and tRNAs, respectively. Pol II is the central component of the basal RNA polymerase II transcription machinery. Pols are composed of mobile elements that move relative to each other. In Pol II, RPB6 is part of the clamp element and together with parts of RPB1 and RPB2 forms a pocket to which the RPB4-RPB7 subcomplex binds. The sequence is that of Probable DNA-directed RNA polymerases I, II, and III subunit RPABC2 from Caenorhabditis briggsae.